A 164-amino-acid polypeptide reads, in one-letter code: Large ribosomal subunit protein uL11 (164 aa).

The protein belongs to the universal ribosomal protein uL11 family. In terms of assembly, part of the ribosomal stalk of the 50S ribosomal subunit. Interacts with L10 and the large rRNA to form the base of the stalk. L10 forms an elongated spine to which L12 dimers bind in a sequential fashion forming a multimeric L10(L12)X complex.

Forms part of the ribosomal stalk which helps the ribosome interact with GTP-bound translation factors. The protein is Large ribosomal subunit protein uL11 of Pyrococcus horikoshii (strain ATCC 700860 / DSM 12428 / JCM 9974 / NBRC 100139 / OT-3).